The sequence spans 142 residues: MPPKKKIAALVKVQLQAGAATPAPPVGTALGPHGVNIMEFCKAYNAQTESMRGNVIPVEITIYEDRSFTFITKTPPAAELIKKAAGLQKGSGVPHKEKVGKLTKDQVREIAQTKLPDLNANDIEAAMKIVEGTARSMGVTTD.

This sequence belongs to the universal ribosomal protein uL11 family. As to quaternary structure, part of the ribosomal stalk of the 50S ribosomal subunit. Interacts with L10 and the large rRNA to form the base of the stalk. L10 forms an elongated spine to which L12 dimers bind in a sequential fashion forming a multimeric L10(L12)X complex. In terms of processing, one or more lysine residues are methylated.

Its function is as follows. Forms part of the ribosomal stalk which helps the ribosome interact with GTP-bound translation factors. In Nocardioides sp. (strain ATCC BAA-499 / JS614), this protein is Large ribosomal subunit protein uL11.